We begin with the raw amino-acid sequence, 668 residues long: Fructose-1,6-bisphosphatase class 3 (668 aa).

It belongs to the FBPase class 3 family. Requires Mn(2+) as cofactor.

It carries out the reaction beta-D-fructose 1,6-bisphosphate + H2O = beta-D-fructose 6-phosphate + phosphate. The protein operates within carbohydrate biosynthesis; gluconeogenesis. This is Fructose-1,6-bisphosphatase class 3 from Clostridium botulinum (strain Kyoto / Type A2).